The sequence spans 88 residues: Probable Fe(2+)-trafficking protein (88 aa).

Belongs to the Fe(2+)-trafficking protein family.

In terms of biological role, could be a mediator in iron transactions between iron acquisition and iron-requiring processes, such as synthesis and/or repair of Fe-S clusters in biosynthetic enzymes. In Neisseria gonorrhoeae (strain ATCC 700825 / FA 1090), this protein is Probable Fe(2+)-trafficking protein.